The following is a 144-amino-acid chain: MASTGSAQKETLNKFISGWKNANAEEMLAVASDDYTQQTLPFSLGHDVRPKQVAEVMLPKLYSILENYELKIHQVVHDVENQKAAVYAISKADTPFGFPWLNEFSAFITFNNAGDKVVNVQEMVDTEFFQKFFPAYQSFLSQNK.

This sequence belongs to the avfA family.

The protein operates within secondary metabolite biosynthesis. In terms of biological role, monooxygenase; part of the gene cluster that mediates the biosynthesis of pestheic acid, a diphenyl ether which is a biosynthetic precursor of the unique chloropupukeananes. The biosynthesis initiates from condensation of acetate and malonate units catalyzed by the non-reducing PKS ptaA. As the ptaA protein is TE/CLC domain-deficient, hydrolysis and Claisen cyclization of the polyketide could be catalyzed by ptaB containing a beta-lactamase domain. The ptaB protein might hydrolyze the thioester bond between the ACP of ptaA and the intermediate to release atrochrysone carboxylic acid, which is spontaneously dehydrated to form endocrocin anthrone. Endocrocin anthrone is then converted to endocrocin, catalyzed by the anthrone oxygenase ptaC. Spontaneous decarboxylation of endocrocin occurs to generate emodin. An O-methyltransferase (ptaH or ptaI) could methylate emodin to form physcion. PtaJ could then catalyze the oxidative cleavage of physcion, and rotation of the intermediate could then afford desmethylisosulochrin. PtaF, a putative NADH-dependent oxidoreductase, might also participate in the oxidative cleavage step. Desmethylisosulochrin is then transformed by another O-methyltransferase (ptaH or ptaI) to form isosulochrin. Chlorination of isosulochrin by ptaM in the cyclohexadienone B ring then produces chloroisosulochrin. PtaE is responsible for the oxidative coupling reactions of both benzophenones isosulochrin and chloroisosulochrin to RES-1214-1 and pestheic acid respectively, regardless of chlorination. The chain is Monooxygenase ptaG from Pestalotiopsis fici (strain W106-1 / CGMCC3.15140).